A 341-amino-acid chain; its full sequence is Ferredoxin--NADP reductase (341 aa).

Residues Asp-38, Gln-46, Tyr-51, Val-91, Phe-125, Asp-292, and Thr-333 each coordinate FAD.

The protein belongs to the ferredoxin--NADP reductase type 2 family. Homodimer. Requires FAD as cofactor.

It carries out the reaction 2 reduced [2Fe-2S]-[ferredoxin] + NADP(+) + H(+) = 2 oxidized [2Fe-2S]-[ferredoxin] + NADPH. The chain is Ferredoxin--NADP reductase from Gluconacetobacter diazotrophicus (strain ATCC 49037 / DSM 5601 / CCUG 37298 / CIP 103539 / LMG 7603 / PAl5).